The chain runs to 184 residues: Ribosome-recycling factor (184 aa).

It belongs to the RRF family.

Its subcellular location is the cytoplasm. In terms of biological role, responsible for the release of ribosomes from messenger RNA at the termination of protein biosynthesis. May increase the efficiency of translation by recycling ribosomes from one round of translation to another. This is Ribosome-recycling factor from Clostridium botulinum (strain Loch Maree / Type A3).